Here is a 328-residue protein sequence, read N- to C-terminus: Aryl-hydrocarbon-interacting protein-like 1 (328 aa).

The region spanning 53-145 (KQVGQPMNII…DLDELQKEPQ (93 aa)) is the PPIase FKBP-type domain. 3 TPR repeats span residues 178–211 (VPLLHGEGNRLYKLGRYDQAATKYQEAIVCLRNL), 230–263 (NTLILNYCQCLLKKEEYYEVLEHTSDILRHHPGI), and 264–297 (VKAYYMRARAHAEVWNAEEAKADLEKVLELEPSM).

Interacts with NUB1. Highly expressed in retina.

It localises to the cytoplasm. The protein localises to the nucleus. May be important in protein trafficking and/or protein folding and stabilization. In Rattus norvegicus (Rat), this protein is Aryl-hydrocarbon-interacting protein-like 1 (Aipl1).